Consider the following 431-residue polypeptide: Histidinol dehydrogenase (431 aa).

Tyr129, Gln191, and Asn214 together coordinate NAD(+). Substrate contacts are provided by Ser237, Gln259, and His262. Zn(2+) contacts are provided by Gln259 and His262. Active-site proton acceptor residues include Glu327 and His328. Residues His328, Asp361, Glu415, and His420 each contribute to the substrate site. Asp361 provides a ligand contact to Zn(2+). Residue His420 participates in Zn(2+) binding.

It belongs to the histidinol dehydrogenase family. Zn(2+) serves as cofactor.

The enzyme catalyses L-histidinol + 2 NAD(+) + H2O = L-histidine + 2 NADH + 3 H(+). Its pathway is amino-acid biosynthesis; L-histidine biosynthesis; L-histidine from 5-phospho-alpha-D-ribose 1-diphosphate: step 9/9. Its function is as follows. Catalyzes the sequential NAD-dependent oxidations of L-histidinol to L-histidinaldehyde and then to L-histidine. The sequence is that of Histidinol dehydrogenase (hisD) from Lactococcus lactis subsp. lactis (strain IL1403) (Streptococcus lactis).